Here is a 362-residue protein sequence, read N- to C-terminus: UDP-N-acetylglucosamine--N-acetylmuramyl-(pentapeptide) pyrophosphoryl-undecaprenol N-acetylglucosamine transferase (362 aa).

UDP-N-acetyl-alpha-D-glucosamine contacts are provided by residues 15–17 (TGG), Asn-127, Arg-165, Ser-191, Ile-247, 266–271 (ALTVSE), and Gln-292.

The protein belongs to the glycosyltransferase 28 family. MurG subfamily.

It is found in the cell inner membrane. The enzyme catalyses di-trans,octa-cis-undecaprenyl diphospho-N-acetyl-alpha-D-muramoyl-L-alanyl-D-glutamyl-meso-2,6-diaminopimeloyl-D-alanyl-D-alanine + UDP-N-acetyl-alpha-D-glucosamine = di-trans,octa-cis-undecaprenyl diphospho-[N-acetyl-alpha-D-glucosaminyl-(1-&gt;4)]-N-acetyl-alpha-D-muramoyl-L-alanyl-D-glutamyl-meso-2,6-diaminopimeloyl-D-alanyl-D-alanine + UDP + H(+). It participates in cell wall biogenesis; peptidoglycan biosynthesis. Functionally, cell wall formation. Catalyzes the transfer of a GlcNAc subunit on undecaprenyl-pyrophosphoryl-MurNAc-pentapeptide (lipid intermediate I) to form undecaprenyl-pyrophosphoryl-MurNAc-(pentapeptide)GlcNAc (lipid intermediate II). In Shewanella baltica (strain OS155 / ATCC BAA-1091), this protein is UDP-N-acetylglucosamine--N-acetylmuramyl-(pentapeptide) pyrophosphoryl-undecaprenol N-acetylglucosamine transferase.